The primary structure comprises 118 residues: MKAISPVRSMSSCYQAVCCLSEQSLSIARGSSHKGPGMDEPMGLLYDMNGCYSKLKELVPGIPQGSKLSQVEILQHVIDYIFDLQIVLGEDQQQSSILSLQKSDFSELATQGDTSVCH.

In terms of domain architecture, bHLH spans 32–84; the sequence is SHKGPGMDEPMGLLYDMNGCYSKLKELVPGIPQGSKLSQVEILQHVIDYIFDL.

Homodimer. Heterodimer with other HLH proteins. Interacts (via HLH domain) with the bHLH protein hes4/hairy2 (via Orange domain). Interacts with stat3. As to expression, at gastrula stage, expressed in all three germ layers, but becomes localized to discrete domains of the developing nervous system during neurulation, including the anterior neural plate, cement gland, eye anlagen, otic placode and both cranial and trunk premigratory and early migratory neural crest cells. Also expressed in the most dorsal and ventral portions of the myotome, the developing heart and anterior blood islets, and in the tail fin mesenchyme. Expressed at a low level in limbs, with expression decreasing as limbs develop, but expressed at a high level in blastemas (regenerated limbs), where expression is localized to both the blastermal epidermis and mesenchyme. Widely expressed in adults including the liver and heart.

The protein resides in the nucleus. Transcriptional regulator (lacking a basic DNA binding domain) which negatively regulates the basic helix-loop-helix (bHLH) transcription factors by forming heterodimers and inhibiting their DNA binding and transcriptional activity. Influences cell fate decisions in the embryo by sequestering and blocking the activity of the bHLH transcription factors that control these decisions. Inhibits the binding of myogenic bHLH-containing complexes to E-box DNA, thereby preventing activation of muscle-specific target genes. Also inhibits the activity of neurogenic factor neurod1/neuroD. Plays a role in cell cycle progression and survival of neural crest progenitors; binding to either hes4-B/hairy2b or stat3 blocks the formation of transcription factor complexes and the repressor function of hes4-B/hairy2B, to allow neural crest progenitors to differentiate. May play a role in the regulation of the circadian rhythm. The sequence is that of DNA-binding protein inhibitor ID-3-A (id3-a) from Xenopus laevis (African clawed frog).